A 344-amino-acid chain; its full sequence is S-adenosylmethionine:tRNA ribosyltransferase-isomerase (344 aa).

The protein belongs to the QueA family. In terms of assembly, monomer.

The protein localises to the cytoplasm. The catalysed reaction is 7-aminomethyl-7-carbaguanosine(34) in tRNA + S-adenosyl-L-methionine = epoxyqueuosine(34) in tRNA + adenine + L-methionine + 2 H(+). It functions in the pathway tRNA modification; tRNA-queuosine biosynthesis. Functionally, transfers and isomerizes the ribose moiety from AdoMet to the 7-aminomethyl group of 7-deazaguanine (preQ1-tRNA) to give epoxyqueuosine (oQ-tRNA). The chain is S-adenosylmethionine:tRNA ribosyltransferase-isomerase from Lactiplantibacillus plantarum (strain ATCC BAA-793 / NCIMB 8826 / WCFS1) (Lactobacillus plantarum).